Consider the following 59-residue polypeptide: uncharacterized protein (59 aa).

Basic and acidic residues-rich tracts occupy residues 1 to 23 and 36 to 45; these read MAEH…DAGR and DPQRASEAGK. Residues 1–59 form a disordered region; sequence MAEHRGGSGNFAEDREKASDAGRKGGQHSGGNFKNDPQRASEAGKKGGQQSGGNKSGKS. Positions 46-59 are enriched in gly residues; the sequence is KGGQQSGGNKSGKS.

The protein belongs to the con-10 family.

This is an uncharacterized protein from Escherichia coli (strain K12).